A 45-amino-acid polypeptide reads, in one-letter code: Mu-conotoxin-like Cal 12.1.2g (45 aa).

Cystine bridges form between Cys3–Cys16, Cys11–Cys28, Cys18–Cys33, and Cys27–Cys39. The residue at position 23 (Pro23) is a 4-hydroxyproline. 2 positions are modified to 6'-bromotryptophan: Trp37 and Trp38. A 4-hydroxyproline modification is found at Pro40.

In terms of tissue distribution, expressed by the venom duct.

The protein resides in the secreted. Functionally, mu-conotoxins block voltage-gated sodium channels. This toxin reversibly blocks voltage-gated sodium channel in cephalopods, with no alteration in the voltage dependence of sodium conductance or on the kinetics of inactivation. In Californiconus californicus (California cone), this protein is Mu-conotoxin-like Cal 12.1.2g.